The sequence spans 425 residues: Adenosylhomocysteinase (425 aa).

The substrate site is built by Thr-60, Asp-132, and Glu-157. 158–160 serves as a coordination point for NAD(+); that stretch reads TTT. Residues Lys-187 and Asp-191 each contribute to the substrate site. Residues Asn-192, 221-226, Glu-244, Asn-279, 300-302, and Asn-347 contribute to the NAD(+) site; these read GYGWCG and SGH.

It belongs to the adenosylhomocysteinase family. It depends on NAD(+) as a cofactor.

It is found in the cytoplasm. It carries out the reaction S-adenosyl-L-homocysteine + H2O = L-homocysteine + adenosine. It functions in the pathway amino-acid biosynthesis; L-homocysteine biosynthesis; L-homocysteine from S-adenosyl-L-homocysteine: step 1/1. In terms of biological role, may play a key role in the regulation of the intracellular concentration of adenosylhomocysteine. The protein is Adenosylhomocysteinase of Synechocystis sp. (strain ATCC 27184 / PCC 6803 / Kazusa).